The chain runs to 235 residues: Purine nucleoside phosphorylase DeoD-type (235 aa).

His-4 lines the a purine D-ribonucleoside pocket. Phosphate is bound by residues Gly-20, Arg-24, Arg-43, and 87–90 (RVGT). A purine D-ribonucleoside is bound by residues Glu-162, 179–181 (EME), and 203–204 (SD). Asp-204 acts as the Proton donor in catalysis.

Belongs to the PNP/UDP phosphorylase family. As to quaternary structure, homohexamer; trimer of homodimers.

The catalysed reaction is a purine D-ribonucleoside + phosphate = a purine nucleobase + alpha-D-ribose 1-phosphate. It catalyses the reaction a purine 2'-deoxy-D-ribonucleoside + phosphate = a purine nucleobase + 2-deoxy-alpha-D-ribose 1-phosphate. Functionally, catalyzes the reversible phosphorolytic breakdown of the N-glycosidic bond in the beta-(deoxy)ribonucleoside molecules, with the formation of the corresponding free purine bases and pentose-1-phosphate. In Bacillus cereus (strain ZK / E33L), this protein is Purine nucleoside phosphorylase DeoD-type.